The chain runs to 286 residues: MEMLQKRKHQTIDETSLNNLIENEKKKIKSLLAFGVPKECVLSRSFTPCELLGPERDHLGMLMFRLETDAESPKFLLISVLFLAMNAFNVSFCTRTSLANLYKTSLVDSINTMLDSCSYLEEKVSLFGVTNYISQGTNCLISCVMQGHVYDVRKENIYGLVILKDLLLEPDWEPRQNAIQYIYLCYIYRQAFNKIEYGIYIVLSELTHEEVLIDLLRNKFSKERFMFMNYLINGDGNLNYFGSLQRIGHCKTQNIKSGILDLQGISLTIIRLKDVFVELCERKIFL.

This sequence belongs to the herpesviridae TRX1 protein family. As to quaternary structure, interacts with TRX2, MCP and capsid vertex component 2/CVC2.

Its subcellular location is the virion. The protein localises to the host nucleus. Functionally, structural component of the T=16 icosahedral capsid. The capsid is composed of pentamers and hexamers of major capsid protein/MCP, which are linked together by heterotrimers called triplexes. These triplexes are formed by a single molecule of triplex protein 1/TRX1 and two copies of triplex protein 2/TRX2. Additionally, TRX1 is required for efficient transport of TRX2 to the nucleus, which is the site of capsid assembly. This is Triplex capsid protein 1 from Human herpesvirus 7 (strain JI) (HHV-7).